A 113-amino-acid polypeptide reads, in one-letter code: Probable leucocin-A immunity protein (113 aa).

This sequence belongs to the immunity protein EntA family.

Imparts immunity to leucocin-A to naturally sensitive host strains. The chain is Probable leucocin-A immunity protein from Leuconostoc gelidum.